The following is a 292-amino-acid chain: Medium chain reductase/dehydrogenase ucsI (292 aa).

Residue Cys43 coordinates Zn(2+). Tyr49 contributes to the substrate binding site. 2 residues coordinate Zn(2+): His65 and Glu66. Residues 184-189 (GCGPVG), Asp208, Arg213, and 276-278 (IGA) each bind NAD(+).

This sequence belongs to the zinc-containing alcohol dehydrogenase family. Requires Zn(2+) as cofactor.

It functions in the pathway mycotoxin biosynthesis. Medium chain reductase/dehydrogenase; part of the gene cluster that mediates the biosynthesis of UCS1025A, a member of the pyrrolizidinone family that acts as a strong telomerase inhibitor and displays potent antibacterial and antitumor properties. These compounds share a hemiaminal-containing pyrrolizidinone core fused with a gamma-lactone, giving a furopyrrolizidine that is connected to a decalin fragment. The polyketide synthase module (PKS) of the PKS-NRPS ucsA is responsible for the synthesis of the polyketide backbone via the condensation of an acetyl-CoA starter unit with 6 malonyl-CoA units. The downstream nonribosomal peptide synthetase (NRPS) module then amidates the carboxyl end of the polyketide with a 2S,3S-methylproline derived from L-isoleucine by the 2-oxoglutarate-dependent dioxygenase ucsF which converts L-isoleucine to (4S,5S)-4-methylpyrroline-5-carboxylate that is further converted to 2S,3S-methylproline by the pyrroline-5-carboxylate reductase ucsG. Reductive release of the completed aminoacyl polyketide from the assembly line can form the 3-pyrrolin-2-one structure via an intramolecular Knoevenagel reaction. Because ucsA lacks a designated enoylreductase (ER) domain, the required activity is provided the enoyl reductase ucsL. This keto acyclic precursor is the substrate of the Diels-Alderase ucsH, that catalyzes the Diels-Alder cycloaddition. Oxidation of the 3S-methyl group to a carboxylate by the cytochrome P450 monooxygenase ucsK allows an oxa-Michael cyclization that might involve the reductase/dehydrogenase ucsI and which furnishes the furopyrrolizidine. The oxidase ucsJ likely plays a critical role in stereoselective reduction of the C5-C6 double bond to afford the required R-configured carboxylate group. Further enolization and oxidation at C5 by an unidentified enzyme affords the last intermediate that can undergo oxa-Michael cyclization to yield UCS1025A. The polypeptide is Medium chain reductase/dehydrogenase ucsI (Acremonium sp).